Here is a 319-residue protein sequence, read N- to C-terminus: Acetyl-coenzyme A carboxylase carboxyl transferase subunit alpha (319 aa).

Positions Arg39–Glu293 constitute a CoA carboxyltransferase C-terminal domain.

The protein belongs to the AccA family. As to quaternary structure, acetyl-CoA carboxylase is a heterohexamer composed of biotin carboxyl carrier protein (AccB), biotin carboxylase (AccC) and two subunits each of ACCase subunit alpha (AccA) and ACCase subunit beta (AccD).

Its subcellular location is the cytoplasm. It catalyses the reaction N(6)-carboxybiotinyl-L-lysyl-[protein] + acetyl-CoA = N(6)-biotinyl-L-lysyl-[protein] + malonyl-CoA. The protein operates within lipid metabolism; malonyl-CoA biosynthesis; malonyl-CoA from acetyl-CoA: step 1/1. Functionally, component of the acetyl coenzyme A carboxylase (ACC) complex. First, biotin carboxylase catalyzes the carboxylation of biotin on its carrier protein (BCCP) and then the CO(2) group is transferred by the carboxyltransferase to acetyl-CoA to form malonyl-CoA. This Neisseria meningitidis serogroup A / serotype 4A (strain DSM 15465 / Z2491) protein is Acetyl-coenzyme A carboxylase carboxyl transferase subunit alpha.